The following is a 596-amino-acid chain: Probable lysosomal cobalamin transporter (596 aa).

The next 10 membrane-spanning stretches (helical) occupy residues 13-33 (IWVA…ITTF), 45-65 (VSIV…LLPV), 99-119 (VVYY…IPFA), 150-170 (LGFV…PAAG), 201-221 (LLIT…LALL), 318-338 (LLGG…MLIT), 353-373 (GYIL…VQSA), 381-401 (ILMA…IATI), 425-445 (IATV…AMIV), and 512-532 (VFGA…MVVF). A glycan (N-linked (GlcNAc...) asparagine) is linked at asparagine 543. Residues 576 to 596 (GRAKNRNGYGTGGGEGSNGRG) form a disordered region. Residues 584–596 (YGTGGGEGSNGRG) are compositionally biased toward gly residues.

Belongs to the LIMR family. LMBRD1 subfamily.

The protein localises to the lysosome membrane. Its function is as follows. Probable lysosomal cobalamin transporter. Required to export cobalamin from lysosomes allowing its conversion to cofactors. The polypeptide is Probable lysosomal cobalamin transporter (Podospora anserina (strain S / ATCC MYA-4624 / DSM 980 / FGSC 10383) (Pleurage anserina)).